The chain runs to 490 residues: ATP synthase subunit alpha 1 (490 aa).

Position 171 to 178 (Gly171 to Ser178) interacts with ATP.

The protein belongs to the ATPase alpha/beta chains family. F-type ATPases have 2 components, CF(1) - the catalytic core - and CF(0) - the membrane proton channel. CF(1) has five subunits: alpha(3), beta(3), gamma(1), delta(1), epsilon(1). CF(0) has three main subunits: a(1), b(2) and c(9-12). The alpha and beta chains form an alternating ring which encloses part of the gamma chain. CF(1) is attached to CF(0) by a central stalk formed by the gamma and epsilon chains, while a peripheral stalk is formed by the delta and b chains.

It localises to the cell inner membrane. The catalysed reaction is ATP + H2O + 4 H(+)(in) = ADP + phosphate + 5 H(+)(out). Its function is as follows. Produces ATP from ADP in the presence of a proton gradient across the membrane. The alpha chain is a regulatory subunit. The protein is ATP synthase subunit alpha 1 of Legionella pneumophila (strain Corby).